Here is a 1470-residue protein sequence, read N- to C-terminus: Calmodulin-regulated spectrin-associated protein 2 (1470 aa).

One can recognise a Calponin-homology (CH) domain in the interval 222–335; it reads WKLVPARYRK…FMAELFWWFE (114 aa). Positions 374–397 are disordered; sequence SSSSSDFTSRYTRPQTHSSVSGGI. Positions 380–390 are enriched in polar residues; that stretch reads FTSRYTRPQTH. 2 positions are modified to phosphoserine: serine 402 and serine 404. Position 412 is a phosphothreonine (threonine 412). Phosphoserine is present on residues serine 450, serine 581, serine 582, serine 594, and serine 656. Disordered stretches follow at residues 580–622 and 648–712; these read QSSP…EDSS and ASNP…EGSE. Phosphothreonine is present on threonine 661. At serine 663 the chain carries Phosphoserine. Residues 663-682 show a composition bias toward low complexity; that stretch reads STKSQPGSSASSSSGVKMTS. Over residues 686–696 the composition is skewed to basic and acidic residues; sequence QKFRKLNHTDG. Residues 739–776 are a coiled coil; sequence LLASEMVHLRMRLEEKRRAIEAQKKKMEAAFTKQRQKM. Over residues 796 to 835 the composition is skewed to basic and acidic residues; that stretch reads REEAAGAEDEKVYTDRAKEKESQKMDGQRSKSLADIKESM. Residues 796 to 864 are disordered; sequence REEAAGAEDE…QWNLTSPSEE (69 aa). Serine 845 carries the phosphoserine modification. The stretch at 870 to 909 forms a coiled coil; that stretch reads ELLEYTKSIEKLNSSLHFLQQEMQRLSLQQEMLMQMREQQ. The MBD region stretch occupies residues 905-1016; it reads MREQQSWVIS…IQTRSFVCFG (112 aa). 2 positions are modified to phosphoserine: serine 914 and serine 919. Disordered stretches follow at residues 930-1059 and 1078-1099; these read RQAG…PLES and NEDQLNQPTDPPPKPVFPPTAP. Residues 935–946 show a composition bias toward low complexity; that stretch reads SSAAAPFSADSP. Polar residues predominate over residues 952-971; sequence SPQSSTRKSASFSVKNQRTP. Phosphothreonine is present on residues threonine 979, threonine 984, and threonine 986. Phosphoserine occurs at positions 990 and 1001. Polar residues predominate over residues 1001–1011; it reads SPSQVPIQTRS. Basic and acidic residues-rich tracts occupy residues 1020-1037 and 1044-1056; these read EPQKEPKPKEEIKKEPSE and SCDHNPGEKEVKP. Over residues 1086–1098 the composition is skewed to pro residues; that stretch reads TDPPPKPVFPPTA. Position 1129 is a phosphoserine (serine 1129). Positions 1147–1219 form a coiled coil; it reads KDDQKAENDM…REFIRQEYMR (73 aa). Basic and acidic residues predominate over residues 1167 to 1233; the sequence is RLRREKETQL…KLMEDMDTVI (67 aa). Positions 1167 to 1327 are disordered; sequence RLRREKETQL…TTSSVASGTE (161 aa). Over residues 1268–1280 the composition is skewed to polar residues; sequence SSLSLASLNTGDT. Phosphoserine occurs at positions 1294, 1300, and 1302. A compositionally biased stretch (polar residues) spans 1315–1327; it reads NASTTSSVASGTE. Positions 1330-1464 constitute a CKK domain; the sequence is GPKLYKEPSA…QTKRPVTPKK (135 aa).

This sequence belongs to the CAMSAP1 family. In terms of assembly, interacts with CAMSAP3. Interacts with KATNA1 and KATNB1; leading to regulate the length of CAMSAP2-decorated microtubule stretches. Interacts with a complex formed by AKAP9 and PDE4DIP; this interaction, which is PDE4DIP isoform-specific, recruits CAMSAP2 to the Golgi. Interacts with MAPRE1/EB1. In terms of tissue distribution, present in the soma, axon, and dendritic shaft of hippocampal neurons (at protein level).

It is found in the cytoplasm. The protein localises to the cytoskeleton. The protein resides in the golgi apparatus. Its subcellular location is the cilium basal body. Its function is as follows. Key microtubule-organizing protein that specifically binds the minus-end of non-centrosomal microtubules and regulates their dynamics and organization. Specifically recognizes growing microtubule minus-ends and autonomously decorates and stabilizes microtubule lattice formed by microtubule minus-end polymerization. Acts on free microtubule minus-ends that are not capped by microtubule-nucleating proteins or other factors and protects microtubule minus-ends from depolymerization. In addition, it also reduces the velocity of microtubule polymerization. Through the microtubule cytoskeleton, also regulates the organization of cellular organelles including the Golgi and the early endosomes. Essential for the tethering, but not for nucleation of non-centrosomal microtubules at the Golgi: together with Golgi-associated proteins AKAP9 and PDE4DIP, required to tether non-centrosomal minus-end microtubules to the Golgi, an important step for polarized cell movement. Also acts as a regulator of neuronal polarity and development: localizes to non-centrosomal microtubule minus-ends in neurons and stabilizes non-centrosomal microtubules, which is required for neuronal polarity, axon specification and dendritic branch formation. Through the microtubule cytoskeleton, regulates the autophagosome transport. This is Calmodulin-regulated spectrin-associated protein 2 from Rattus norvegicus (Rat).